A 301-amino-acid chain; its full sequence is MTFMDFEKLRHGTELIKRGFARMQKGGVIMDVTTPEQARIAEEAGAVAVMALQAVPADIRKAGGVARMADPEIVQQIIETVTIPVMAKARIGHFVEAEILEALGVDMVDESEVLTPADPFYHIDKTQFTVPFVCGARNLGEALRRINEGAAMIRTKGEAGTGDVSQAVKHMKQIQGEIRALAGKTKEELIMVAREIEAPIELVVETAKMQRLPVVNFAAGGVATPADAALMMRLGADGVFVGSGIFKAENPEKMAKAVVEAVNNYDNPVKLAEISKGVGAGMKGISADMIPAQEALQERGW.

Residue D31 coordinates D-ribose 5-phosphate. K88 (schiff-base intermediate with D-ribose 5-phosphate) is an active-site residue. G160 contacts D-ribose 5-phosphate. Position 172 (K172) interacts with D-glyceraldehyde 3-phosphate. Residues G221 and G242 to S243 each bind D-ribose 5-phosphate.

This sequence belongs to the PdxS/SNZ family. As to quaternary structure, in the presence of PdxT, forms a dodecamer of heterodimers.

The catalysed reaction is aldehydo-D-ribose 5-phosphate + D-glyceraldehyde 3-phosphate + L-glutamine = pyridoxal 5'-phosphate + L-glutamate + phosphate + 3 H2O + H(+). The protein operates within cofactor biosynthesis; pyridoxal 5'-phosphate biosynthesis. Its function is as follows. Catalyzes the formation of pyridoxal 5'-phosphate from ribose 5-phosphate (RBP), glyceraldehyde 3-phosphate (G3P) and ammonia. The ammonia is provided by the PdxT subunit. Can also use ribulose 5-phosphate and dihydroxyacetone phosphate as substrates, resulting from enzyme-catalyzed isomerization of RBP and G3P, respectively. The polypeptide is Pyridoxal 5'-phosphate synthase subunit PdxS (Methanosarcina acetivorans (strain ATCC 35395 / DSM 2834 / JCM 12185 / C2A)).